Reading from the N-terminus, the 919-residue chain is MALAKELMGYPLITERSSLVSSASHFKKRTQSTQFSINPFDRRPRKTKSGVVAAISEDLVKTLRFSTTTGDRKSEEEEKAAVKFKVRAVVTVRNKNKEDLKETLVKHLDAFADKIGRNIVLELISTQLDPKTKLPKKSNAAVLKDWSKKSKTKAERVHYTAEFTVDAAFGSPGAITVMNKHQKEFFLESITIEGFALGPVHFPCNSWVQSQKDHPDKRIFFTNQPYLPNETPSGLRVLREKELKNLRGDGSGVRKLSDRIYDFDVYNDLGNPDKSSELSRPKLGGKEVPYPRRCRTGRQSTVSDKDAESRVEKPLPMYVPRDEQFEESKQDTFAAGRLKAVLHHLIPSLKASIVAEDFADFGEIDRLYKEGLLLKLGFQDDIFKKFPLPKVVVDTLQESTKGLLKYDTPKILSKDKNAWLRDDEFARQAIAGINPVNIERVKTFPPVSNLDPKIYGPQHSALTDDHIIGHLDGFSVQQALEENRLYMLDYHDIFLPFLDRINALDGRKAYATRTIFFLTRLGTLKPVAIELSLPPHGPKHRSKRVLTPPVDATSNWMWQLAKAHVSSNDAGVHQLVNHWLRTHACLEPFILAAHRQLSAMHPIFKLLDPHMRYTLEINALARQSLISADGVIEGGFTAGAYGMEMSAAAYKSSWRFDMEGLPADLIRRGMAIPDATQPHGLKLLIEDYPYANDGLLLWSAIQTWVRTYVERYYPNPNLIKTDSELQSWYSESINVGHADLRDADWWPELSTVDDLVSILTTLIWLASAQHAALNFGQYPYGGYVPNRPPLMRRLIPDESDPEYASFISHPEKYYFSSMPSLAQTSKFMAVVDTLSTHSPDEEYIGERQQPSIWTGDAEIVEAFYGFAAEIGRIEKEIEKRNADPDRRNRCGAGVLPYELLVPSSEPGVTCRGVPNSVSI.

The transit peptide at M1 to V52 directs the protein to the chloroplast. A PLAT domain is found at V86 to T222. In terms of domain architecture, Lipoxygenase spans P225–I919. The segment at P272 to R310 is disordered. Fe cation is bound by residues H578, H583, H770, N774, and I919.

The protein belongs to the lipoxygenase family. Fe cation serves as cofactor. Expressed in roots and leaves.

The protein localises to the plastid. The protein resides in the chloroplast. The catalysed reaction is (9Z,12Z)-octadecadienoate + O2 = (13S)-hydroperoxy-(9Z,11E)-octadecadienoate. It carries out the reaction (9Z,12Z,15Z)-octadecatrienoate + O2 = (13S)-hydroperoxy-(9Z,11E,15Z)-octadecatrienoate. It participates in lipid metabolism; oxylipin biosynthesis. Its function is as follows. 13S-lipoxygenase that can use linolenic acid as substrates. Plant lipoxygenases may be involved in a number of diverse aspects of plant physiology including growth and development, pest resistance, and senescence or responses to wounding. Catalyzes the hydroperoxidation of lipids containing a cis,cis-1,4-pentadiene structure. This chain is Lipoxygenase 3, chloroplastic (LOX3), found in Arabidopsis thaliana (Mouse-ear cress).